The following is a 194-amino-acid chain: 3-isopropylmalate dehydratase small subunit (194 aa).

It belongs to the LeuD family. LeuD type 1 subfamily. In terms of assembly, heterodimer of LeuC and LeuD.

The catalysed reaction is (2R,3S)-3-isopropylmalate = (2S)-2-isopropylmalate. Its pathway is amino-acid biosynthesis; L-leucine biosynthesis; L-leucine from 3-methyl-2-oxobutanoate: step 2/4. Functionally, catalyzes the isomerization between 2-isopropylmalate and 3-isopropylmalate, via the formation of 2-isopropylmaleate. The protein is 3-isopropylmalate dehydratase small subunit of Limosilactobacillus fermentum (strain NBRC 3956 / LMG 18251) (Lactobacillus fermentum).